Consider the following 172-residue polypeptide: RNA pyrophosphohydrolase (172 aa).

Residues 6-149 form the Nudix hydrolase domain; sequence GFRANVGIII…KRDVYRKVMK (144 aa). Positions 38–59 match the Nudix box motif; that stretch reads GGVDEGETPEEAMFRELYEEVG.

Belongs to the Nudix hydrolase family. RppH subfamily. Requires a divalent metal cation as cofactor.

Accelerates the degradation of transcripts by removing pyrophosphate from the 5'-end of triphosphorylated RNA, leading to a more labile monophosphorylated state that can stimulate subsequent ribonuclease cleavage. The polypeptide is RNA pyrophosphohydrolase (Shewanella sediminis (strain HAW-EB3)).